Consider the following 157-residue polypeptide: Histidine-containing phosphotransfer protein 5 (157 aa).

The residue at position 1 (Met1) is an N-acetylmethionine. The HPt domain maps to 41-148 (TPDFVAEVVS…NLEKQILQAG (108 aa)). His83 is subject to Phosphohistidine.

Interacts with the B-type response regulators ARR1 and ARR2. Binds to AHK2, AHK3, AHK4 and AHK5. Two-component system major event consists of a His-to-Asp phosphorelay between a sensor histidine kinase (HK) and a response regulator (RR). In plants, the His-to-Asp phosphorelay involves an additional intermediate named Histidine-containing phosphotransfer protein (HPt). This multistep phosphorelay consists of a His-Asp-His-Asp sequential transfer of a phosphate group between first a His and an Asp of the HK protein, followed by the transfer to a conserved His of the HPt protein and finally the transfer to an Asp in the receiver domain of the RR protein. As to expression, expressed in the whole plant.

It is found in the cytoplasm. The protein resides in the cytosol. The protein localises to the nucleus. Functionally, functions as a two-component phosphorelay mediator between cytokinin sensor histidine kinases and response regulators (B-type ARRs). Plays an important role in propagating cytokinin signal transduction through the multistep His-to-Asp phosphorelay. In Arabidopsis thaliana (Mouse-ear cress), this protein is Histidine-containing phosphotransfer protein 5 (AHP5).